The sequence spans 150 residues: Regulatory protein RecX (150 aa).

This sequence belongs to the RecX family.

It localises to the cytoplasm. Functionally, modulates RecA activity. The sequence is that of Regulatory protein RecX from Acidithiobacillus ferrooxidans (strain ATCC 23270 / DSM 14882 / CIP 104768 / NCIMB 8455) (Ferrobacillus ferrooxidans (strain ATCC 23270)).